The sequence spans 182 residues: Small ribosomal subunit protein uS4c (182 aa).

Residues 13 to 32 (GLTSKRPRSGSDLKNPLRSG) form a disordered region. In terms of domain architecture, S4 RNA-binding spans 82–143 (MRLDNILFRL…KQRSKALIQN (62 aa)).

Belongs to the universal ribosomal protein uS4 family. Part of the 30S ribosomal subunit. Contacts protein S5. The interaction surface between S4 and S5 is involved in control of translational fidelity.

It localises to the plastid. Its subcellular location is the chloroplast. One of the primary rRNA binding proteins, it binds directly to 16S rRNA where it nucleates assembly of the body of the 30S subunit. Functionally, with S5 and S12 plays an important role in translational accuracy. The polypeptide is Small ribosomal subunit protein uS4c (rps4) (Scadoxus puniceus (Paintbrush lily)).